We begin with the raw amino-acid sequence, 91 residues long: Large ribosomal subunit protein uL23 (91 aa).

This sequence belongs to the universal ribosomal protein uL23 family. As to quaternary structure, part of the 50S ribosomal subunit. Contacts protein L29, and trigger factor when it is bound to the ribosome.

One of the early assembly proteins it binds 23S rRNA. One of the proteins that surrounds the polypeptide exit tunnel on the outside of the ribosome. Forms the main docking site for trigger factor binding to the ribosome. The polypeptide is Large ribosomal subunit protein uL23 (Staphylococcus epidermidis (strain ATCC 35984 / DSM 28319 / BCRC 17069 / CCUG 31568 / BM 3577 / RP62A)).